The following is a 131-amino-acid chain: Small ribosomal subunit protein uS11 (131 aa).

This sequence belongs to the universal ribosomal protein uS11 family. Part of the 30S ribosomal subunit. Interacts with proteins S7 and S18. Binds to IF-3.

Located on the platform of the 30S subunit, it bridges several disparate RNA helices of the 16S rRNA. Forms part of the Shine-Dalgarno cleft in the 70S ribosome. This Neisseria gonorrhoeae (strain ATCC 700825 / FA 1090) protein is Small ribosomal subunit protein uS11.